The following is a 250-amino-acid chain: MTIEQNKNRRSAASGCAIHCHDCSMGTLCIPFTLNANELDQLDDIIERKKPIQKGEQIFKSGDPLKSLFAIRSGTIKSYTITEQGDEQITGFHLAGDVIGFDGIHAQSHQSFAQALETSMVCEIPFNILDELSGTMPKLRQQIMRLMSNEIMSDQEMILLLSKKNAEERLAAFISNLANRFGNRGFSAKEFRLTMTRGDIGNYLGLTVETISRLLGRFQKSGLIEVKGKYIIIVDHHELNLLAGNARIAR.

The region spanning 164–237 (KNAEERLAAF…GKYIIIVDHH (74 aa)) is the HTH crp-type domain. The H-T-H motif DNA-binding region spans 197-216 (RGDIGNYLGLTVETISRLLG).

As to quaternary structure, monomer.

Functionally, regulates anaerobic growth on fumarate, nitrite, Fe(3+), TMAO, DMSO, thiosulfate and sulfite, but not on nitrate nor Mn(4+). This Shewanella oneidensis (strain ATCC 700550 / JCM 31522 / CIP 106686 / LMG 19005 / NCIMB 14063 / MR-1) protein is Electron transport regulator A (etrA).